The following is a 142-amino-acid chain: Large ribosomal subunit protein uL13 (142 aa).

It belongs to the universal ribosomal protein uL13 family. In terms of assembly, part of the 50S ribosomal subunit.

Functionally, this protein is one of the early assembly proteins of the 50S ribosomal subunit, although it is not seen to bind rRNA by itself. It is important during the early stages of 50S assembly. The chain is Large ribosomal subunit protein uL13 from Pseudomonas syringae pv. tomato (strain ATCC BAA-871 / DC3000).